The following is a 356-amino-acid chain: Arginine kinase (356 aa).

Residues 8 to 91 (EKLEAGFKKL…FDPIIEDYHG (84 aa)) enclose the Phosphagen kinase N-terminal domain. A substrate-binding site is contributed by 64–68 (GVGIY). A Phosphagen kinase C-terminal domain is found at 119-356 (YVISTRVRCG…LELIKIEGSL (238 aa)). Residues 122-126 (STRVR) and His-185 each bind ATP. Residue Glu-225 participates in substrate binding. ATP is bound at residue Arg-229. Cys-271 serves as a coordination point for substrate. Residues 280–284 (RASVH) and 309–314 (RGSTGE) contribute to the ATP site. A substrate-binding site is contributed by Glu-314.

It belongs to the ATP:guanido phosphotransferase family.

It carries out the reaction L-arginine + ATP = N(omega)-phospho-L-arginine + ADP + H(+). The chain is Arginine kinase (ARGK) from Schistocerca americana (American grasshopper).